The primary structure comprises 387 residues: Anhydro-N-acetylmuramic acid kinase (387 aa).

17–24 (GTSMDGVD) lines the ATP pocket.

Belongs to the anhydro-N-acetylmuramic acid kinase family.

It carries out the reaction 1,6-anhydro-N-acetyl-beta-muramate + ATP + H2O = N-acetyl-D-muramate 6-phosphate + ADP + H(+). It participates in amino-sugar metabolism; 1,6-anhydro-N-acetylmuramate degradation. Its pathway is cell wall biogenesis; peptidoglycan recycling. In terms of biological role, catalyzes the specific phosphorylation of 1,6-anhydro-N-acetylmuramic acid (anhMurNAc) with the simultaneous cleavage of the 1,6-anhydro ring, generating MurNAc-6-P. Is required for the utilization of anhMurNAc either imported from the medium or derived from its own cell wall murein, and thus plays a role in cell wall recycling. The polypeptide is Anhydro-N-acetylmuramic acid kinase (Burkholderia pseudomallei (strain 1710b)).